The chain runs to 681 residues: Glycogen-binding subunit 76A (681 aa).

Disordered regions lie at residues 1–20, 53–94, 232–251, 285–391, and 405–435; these read MNDPGDIPLTHTSTPDSRPP, LGSQ…DLQP, SLTEVEQTKPEEGKLTNGHL, FADR…ASNL, and QDATEAVEKSGAPSRGTTVDTTDDEDDCRPQ. Over residues 59 to 69 the composition is skewed to acidic residues; that stretch reads EEGEGNAEDEP. Positions 72-91 are enriched in polar residues; that stretch reads NGTSTNTWVNSHDSEQTVTD. Composition is skewed to basic and acidic residues over residues 237-251, 297-308, and 321-336; these read EQTKPEEGKLTNGHL, RVQKESSQERVP, and PSDRVQTDASDERVQE. Positions 353–364 are enriched in polar residues; sequence TESISTEVTTLE. Residues 365 to 374 show a composition bias toward basic and acidic residues; it reads RSPEESRNDE. The region spanning 525 to 632 is the CBM21 domain; it reads AVREKQVSLE…NNYGANYCFQ (108 aa). Position 545 is a phosphothreonine (Thr-545). Residues Ser-547 and Ser-549 each carry the phosphoserine modification.

The polypeptide is Glycogen-binding subunit 76A (Gbs-76A) (Drosophila melanogaster (Fruit fly)).